A 190-amino-acid polypeptide reads, in one-letter code: Frizzled-6 (190 aa).

Positions 1–20 constitute an FZ domain; it reads FGFAWPEELECSRLVNCDET. At 1 to 89 the chain is on the extracellular side; it reads FGFAWPEELE…NYELDVAKSF (89 aa). A helical transmembrane segment spans residues 90–110; sequence IGIVSIFCLCATLFTFLTFLI. Residues 111–121 are Cytoplasmic-facing; that stretch reads DVKRFRYPERP. A helical transmembrane segment spans residues 122 to 142; the sequence is IIYYSVCYSIVSLMYFIGFLL. At 143-169 the chain is on the extracellular side; sequence GNRTACNKADDKLEIGETVVLGSQNKA. The N-linked (GlcNAc...) asparagine glycan is linked to Asn144. Residues 170 to 190 form a helical membrane-spanning segment; the sequence is CTVLFMVLYFFTMAGTIWWVI.

The protein belongs to the G-protein coupled receptor Fz/Smo family.

The protein localises to the membrane. The protein resides in the cell membrane. It is found in the cell surface. Its subcellular location is the apical cell membrane. It localises to the cytoplasmic vesicle membrane. Functionally, receptor for Wnt proteins. Most of frizzled receptors are coupled to the beta-catenin canonical signaling pathway, which leads to the activation of disheveled proteins, inhibition of GSK-3 kinase, nuclear accumulation of beta-catenin and activation of Wnt target genes. A second signaling pathway involving PKC and calcium fluxes has been seen for some family members, but it is not yet clear if it represents a distinct pathway or if it can be integrated in the canonical pathway, as PKC seems to be required for Wnt-mediated inactivation of GSK-3 kinase. Both pathways seem to involve interactions with G-proteins. Activation by Wnt5A stimulates PKC activity via a G-protein-dependent mechanism. Involved in transduction and intercellular transmission of polarity information during tissue morphogenesis and/or in differentiated tissues. Together with FZD3, may be involved in the neural tube closure and plays a role in the regulation of the establishment of planar cell polarity (PCP), particularly in the orientation of asymmetric bundles of stereocilia on the apical faces of a subset of auditory and vestibular sensory cells located in the inner ear. The protein is Frizzled-6 (FZD6) of Gallus gallus (Chicken).